The sequence spans 315 residues: Aspartate carbamoyltransferase catalytic subunit (315 aa).

Carbamoyl phosphate is bound by residues Arg61 and Thr62. Lys90 contacts L-aspartate. Arg111, His139, and Gln142 together coordinate carbamoyl phosphate. L-aspartate is bound by residues Arg172 and Arg234. Carbamoyl phosphate-binding residues include Leu274 and Pro275.

This sequence belongs to the aspartate/ornithine carbamoyltransferase superfamily. ATCase family. As to quaternary structure, heterooligomer of catalytic and regulatory chains.

The catalysed reaction is carbamoyl phosphate + L-aspartate = N-carbamoyl-L-aspartate + phosphate + H(+). It participates in pyrimidine metabolism; UMP biosynthesis via de novo pathway; (S)-dihydroorotate from bicarbonate: step 2/3. Its function is as follows. Catalyzes the condensation of carbamoyl phosphate and aspartate to form carbamoyl aspartate and inorganic phosphate, the committed step in the de novo pyrimidine nucleotide biosynthesis pathway. The protein is Aspartate carbamoyltransferase catalytic subunit of Hyperthermus butylicus (strain DSM 5456 / JCM 9403 / PLM1-5).